The chain runs to 72 residues: Putative transmembrane protein DDB_G0272126 (72 aa).

2 consecutive transmembrane segments (helical) span residues 6–26 (KIIK…NTII) and 38–58 (IILV…IFYG).

It is found in the membrane. This is Putative transmembrane protein DDB_G0272126 from Dictyostelium discoideum (Social amoeba).